Here is a 145-residue protein sequence, read N- to C-terminus: D-aminoacyl-tRNA deacylase (145 aa).

Positions 137-138 match the Gly-cisPro motif, important for rejection of L-amino acids motif; sequence GP.

This sequence belongs to the DTD family. As to quaternary structure, homodimer.

Its subcellular location is the cytoplasm. The enzyme catalyses glycyl-tRNA(Ala) + H2O = tRNA(Ala) + glycine + H(+). It catalyses the reaction a D-aminoacyl-tRNA + H2O = a tRNA + a D-alpha-amino acid + H(+). Its function is as follows. An aminoacyl-tRNA editing enzyme that deacylates mischarged D-aminoacyl-tRNAs. Also deacylates mischarged glycyl-tRNA(Ala), protecting cells against glycine mischarging by AlaRS. Acts via tRNA-based rather than protein-based catalysis; rejects L-amino acids rather than detecting D-amino acids in the active site. By recycling D-aminoacyl-tRNA to D-amino acids and free tRNA molecules, this enzyme counteracts the toxicity associated with the formation of D-aminoacyl-tRNA entities in vivo and helps enforce protein L-homochirality. This Lactobacillus delbrueckii subsp. bulgaricus (strain ATCC 11842 / DSM 20081 / BCRC 10696 / JCM 1002 / NBRC 13953 / NCIMB 11778 / NCTC 12712 / WDCM 00102 / Lb 14) protein is D-aminoacyl-tRNA deacylase.